The sequence spans 498 residues: ATP synthase subunit alpha 1 (498 aa).

Glycine 164–threonine 171 is an ATP binding site.

The protein belongs to the ATPase alpha/beta chains family. As to quaternary structure, F-type ATPases have 2 components, CF(1) - the catalytic core - and CF(0) - the membrane proton channel. CF(1) has five subunits: alpha(3), beta(3), gamma(1), delta(1), epsilon(1). CF(0) has three main subunits: a(1), b(2) and c(9-12). The alpha and beta chains form an alternating ring which encloses part of the gamma chain. CF(1) is attached to CF(0) by a central stalk formed by the gamma and epsilon chains, while a peripheral stalk is formed by the delta and b chains.

Its subcellular location is the cell membrane. The enzyme catalyses ATP + H2O + 4 H(+)(in) = ADP + phosphate + 5 H(+)(out). In terms of biological role, produces ATP from ADP in the presence of a proton gradient across the membrane. The alpha chain is a regulatory subunit. The polypeptide is ATP synthase subunit alpha 1 (Listeria welshimeri serovar 6b (strain ATCC 35897 / DSM 20650 / CCUG 15529 / CIP 8149 / NCTC 11857 / SLCC 5334 / V8)).